Consider the following 104-residue polypeptide: Small ribosomal subunit protein uS10 (104 aa).

It belongs to the universal ribosomal protein uS10 family. As to quaternary structure, part of the 30S ribosomal subunit.

In terms of biological role, involved in the binding of tRNA to the ribosomes. This Ruegeria pomeroyi (strain ATCC 700808 / DSM 15171 / DSS-3) (Silicibacter pomeroyi) protein is Small ribosomal subunit protein uS10.